The chain runs to 179 residues: Inosine/xanthosine triphosphatase (179 aa).

Position 71 (Glu-71) interacts with Mg(2+). Substrate is bound at residue 71 to 72 (EA).

This sequence belongs to the YjjX NTPase family. In terms of assembly, homodimer. Mg(2+) serves as cofactor. Requires Mn(2+) as cofactor.

The catalysed reaction is XTP + H2O = XDP + phosphate + H(+). It catalyses the reaction ITP + H2O = IDP + phosphate + H(+). Its function is as follows. Phosphatase that hydrolyzes non-canonical purine nucleotides such as XTP and ITP to their respective diphosphate derivatives. Probably excludes non-canonical purines from DNA/RNA precursor pool, thus preventing their incorporation into DNA/RNA and avoiding chromosomal lesions. This Shewanella sp. (strain MR-4) protein is Inosine/xanthosine triphosphatase.